Consider the following 430-residue polypeptide: Phosphoglucosamine mutase (430 aa).

Serine 93 acts as the Phosphoserine intermediate in catalysis. Serine 93, aspartate 227, aspartate 229, and aspartate 231 together coordinate Mg(2+). Serine 93 is subject to Phosphoserine.

It belongs to the phosphohexose mutase family. The cofactor is Mg(2+). In terms of processing, activated by phosphorylation.

The enzyme catalyses alpha-D-glucosamine 1-phosphate = D-glucosamine 6-phosphate. Functionally, catalyzes the conversion of glucosamine-6-phosphate to glucosamine-1-phosphate. In Thermosipho africanus (strain TCF52B), this protein is Phosphoglucosamine mutase.